The sequence spans 173 residues: Thiol-disulfide oxidoreductase ResA (173 aa).

A helical; Signal-anchor for type II membrane protein transmembrane segment spans residues 10-29 (VIILLILCGAVGFTLYQGYF). Residues 35–173 (MEIGKEAPNF…LEEYLKKITP (139 aa)) enclose the Thioredoxin domain. Cys73 and Cys76 are oxidised to a cystine.

Belongs to the thioredoxin family. ResA subfamily.

The protein localises to the cell membrane. It functions in the pathway protein modification; cytochrome c assembly. In terms of biological role, thiol-disulfide oxidoreductase which is required in disulfide reduction during c-type cytochrome synthesis. May accept reducing equivalents from CcdA, leading to breakage of disulfide bonds in apocytochrome c; following this reduction heme can be covalently attached. The chain is Thiol-disulfide oxidoreductase ResA from Bacillus thuringiensis subsp. konkukian (strain 97-27).